The sequence spans 202 residues: Imidazoleglycerol-phosphate dehydratase (202 aa).

It belongs to the imidazoleglycerol-phosphate dehydratase family.

It localises to the cytoplasm. The enzyme catalyses D-erythro-1-(imidazol-4-yl)glycerol 3-phosphate = 3-(imidazol-4-yl)-2-oxopropyl phosphate + H2O. It participates in amino-acid biosynthesis; L-histidine biosynthesis; L-histidine from 5-phospho-alpha-D-ribose 1-diphosphate: step 6/9. This is Imidazoleglycerol-phosphate dehydratase from Synechococcus sp. (strain WH7803).